The following is a 354-amino-acid chain: MRRACIIGASGVIGGELLRLLLGHNNVEVVCATSRRFAGEFIYRVHPNLRGFINLKFTQPSIDAVLKSESDVVFLALPHGESVKWVPKLVESGLLAIDLSADFRLKNPDDYVKWYHWPQPHPYPDLLKAAAYGLPELHRDEIKATKVIAVPGCMATASIVSLAPLVKGHLINNDFIVVDAKIASSGAGAEGTVLDYHWHRTHVVRPYQPVGHRHTAEIEQELSLLAGSQVNVAFTPHAVDMVRGIFVTGHARLSGSISEPDLWRAYRGMYGNERFIRIVKDKAGLAHYPSVKYVVGTNMVDVGFELDQRLNRVVVFSAIDNLIRGAAGQAIQSFNINQGFPEDEGLRFITPYPV.

NADP(+) is bound by residues 10-13 (SGVI) and 34-36 (SRR). The active site involves C153. Residue N321 coordinates NADP(+).

Belongs to the NAGSA dehydrogenase family. Type 1 subfamily. LysY sub-subfamily.

It localises to the cytoplasm. The enzyme catalyses [amino-group carrier protein]-C-terminal-N-(1-carboxy-5-oxopentan-1-yl)-L-glutamine + phosphate + NADP(+) = [amino-group carrier protein]-C-terminal-N-(1-carboxy-5-phosphooxy-5-oxopentan-1-yl)-L-glutamine + NADPH + H(+). The catalysed reaction is [amino-group carrier protein]-C-terminal-gamma-(L-glutamyl-5-semialdehyde)-L-glutamate + phosphate + NADP(+) = [amino-group carrier protein]-C-terminal-gamma-(5-phospho-L-glutamyl)-L-glutamate + NADPH + H(+). It functions in the pathway amino-acid biosynthesis; L-lysine biosynthesis via AAA pathway; L-lysine from L-alpha-aminoadipate (Thermus route): step 3/5. It participates in amino-acid biosynthesis; L-arginine biosynthesis. Functionally, involved in both the arginine and lysine biosynthetic pathways. The chain is Putative [LysW]-L-2-aminoadipate/[LysW]-L-glutamate phosphate reductase from Caldivirga maquilingensis (strain ATCC 700844 / DSM 13496 / JCM 10307 / IC-167).